The sequence spans 176 residues: uncharacterized protein (176 aa).

The first 22 residues, M1–S22, serve as a signal peptide directing secretion. Residues C38 and C78 are joined by a disulfide bond.

It belongs to the fimbrial protein family.

The protein resides in the fimbrium. This is an uncharacterized protein from Escherichia coli (strain K12).